A 1361-amino-acid chain; its full sequence is uncharacterized protein (1361 aa).

Belongs to the IIV-6 261R/396L/443R family.

This is an uncharacterized protein from Invertebrate iridescent virus 6 (IIV-6).